A 355-amino-acid polypeptide reads, in one-letter code: U5 small nuclear ribonucleoprotein 40 kDa protein (355 aa).

WD repeat units follow at residues 60–99, 103–142, 145–185, 187–226, 230–269, 280–319, and 322–355; these read GHKG…INYS, GHKG…LIKR, EHSG…STHL, QHKY…DPLY, SHQD…PPNR, NFEK…LQYC, and GHSG…EIKP.

Component of the pre-catalytic and catalytic spliceosome complexes. Component of the postcatalytic spliceosome P complex. Part of the U5 snRNP complex. Component of the U4/U6-U5 tri-snRNP complex.

It localises to the nucleus. Functionally, required for pre-mRNA splicing as component of the activated spliceosome. Component of the U5 small nuclear ribonucleoprotein (snRNP) complex and the U4/U6-U5 tri-snRNP complex, building blocks of the spliceosome. The sequence is that of U5 small nuclear ribonucleoprotein 40 kDa protein (snrnp40) from Dictyostelium discoideum (Social amoeba).